A 654-amino-acid polypeptide reads, in one-letter code: tRNA 5-methylaminomethyl-2-thiouridine biosynthesis bifunctional protein MnmC (654 aa).

Residues 1 to 235 are tRNA (mnm(5)s(2)U34)-methyltransferase; sequence MSDFQHAQLD…KREMLSGTYQ (235 aa). Residues 261 to 654 form an FAD-dependent cmnm(5)s(2)U34 oxidoreductase region; that stretch reads VGGGLAGCAS…LRDLVRGQRG (394 aa).

The protein in the N-terminal section; belongs to the methyltransferase superfamily. tRNA (mnm(5)s(2)U34)-methyltransferase family. It in the C-terminal section; belongs to the DAO family. FAD is required as a cofactor.

The protein resides in the cytoplasm. It catalyses the reaction 5-aminomethyl-2-thiouridine(34) in tRNA + S-adenosyl-L-methionine = 5-methylaminomethyl-2-thiouridine(34) in tRNA + S-adenosyl-L-homocysteine + H(+). Functionally, catalyzes the last two steps in the biosynthesis of 5-methylaminomethyl-2-thiouridine (mnm(5)s(2)U) at the wobble position (U34) in tRNA. Catalyzes the FAD-dependent demodification of cmnm(5)s(2)U34 to nm(5)s(2)U34, followed by the transfer of a methyl group from S-adenosyl-L-methionine to nm(5)s(2)U34, to form mnm(5)s(2)U34. In Pseudomonas aeruginosa (strain ATCC 15692 / DSM 22644 / CIP 104116 / JCM 14847 / LMG 12228 / 1C / PRS 101 / PAO1), this protein is tRNA 5-methylaminomethyl-2-thiouridine biosynthesis bifunctional protein MnmC.